A 950-amino-acid chain; its full sequence is Glycine dehydrogenase (decarboxylating) (950 aa).

At lysine 698 the chain carries N6-(pyridoxal phosphate)lysine.

Belongs to the GcvP family. The glycine cleavage system is composed of four proteins: P, T, L and H. The cofactor is pyridoxal 5'-phosphate.

It carries out the reaction N(6)-[(R)-lipoyl]-L-lysyl-[glycine-cleavage complex H protein] + glycine + H(+) = N(6)-[(R)-S(8)-aminomethyldihydrolipoyl]-L-lysyl-[glycine-cleavage complex H protein] + CO2. Its function is as follows. The glycine cleavage system catalyzes the degradation of glycine. The P protein binds the alpha-amino group of glycine through its pyridoxal phosphate cofactor; CO(2) is released and the remaining methylamine moiety is then transferred to the lipoamide cofactor of the H protein. This chain is Glycine dehydrogenase (decarboxylating), found in Neisseria meningitidis serogroup A / serotype 4A (strain DSM 15465 / Z2491).